We begin with the raw amino-acid sequence, 391 residues long: Alkanesulfonate monooxygenase (391 aa).

It belongs to the SsuD family.

It catalyses the reaction an alkanesulfonate + FMNH2 + O2 = an aldehyde + FMN + sulfite + H2O + 2 H(+). In terms of biological role, catalyzes the desulfonation of aliphatic sulfonates. In Rhodopseudomonas palustris (strain TIE-1), this protein is Alkanesulfonate monooxygenase.